Here is a 118-residue protein sequence, read N- to C-terminus: uncharacterized protein (118 aa).

A helical membrane pass occupies residues 95 to 115 (IIINLVIILAMYAPEIIGKLL).

It belongs to the M.jannaschii MJ0023/MJ0349/MJ1072/MJ1074/MJ1107/MJECL16 family.

Its subcellular location is the membrane. This is an uncharacterized protein from Methanocaldococcus jannaschii (strain ATCC 43067 / DSM 2661 / JAL-1 / JCM 10045 / NBRC 100440) (Methanococcus jannaschii).